A 42-amino-acid polypeptide reads, in one-letter code: Mating-type M-specific polypeptide Mi (42 aa).

Its subcellular location is the cytoplasm. It is found in the nucleus. Mating type proteins are sequence specific DNA-binding proteins that act as master switches in yeast differentiation by controlling gene expression in a cell type-specific fashion. Required for meiosis, but plays no role in conjugation. This Schizosaccharomyces pombe (strain 972 / ATCC 24843) (Fission yeast) protein is Mating-type M-specific polypeptide Mi (mat1-Mi).